Reading from the N-terminus, the 386-residue chain is tRNA N6-adenosine threonylcarbamoyltransferase (386 aa).

The a divalent metal cation site is built by H141, H145, and Y162. Substrate-binding positions include 162-166 (YVSGG), D194, G209, E213, and N315. An a divalent metal cation-binding site is contributed by D344.

Belongs to the KAE1 / TsaD family. As to quaternary structure, component of the EKC/KEOPS complex composed of at least BUD32, CGI121, GON7, KAE1 and PCC1; the whole complex dimerizes. A divalent metal cation serves as cofactor.

It localises to the cytoplasm. It is found in the nucleus. It catalyses the reaction L-threonylcarbamoyladenylate + adenosine(37) in tRNA = N(6)-L-threonylcarbamoyladenosine(37) in tRNA + AMP + H(+). Functionally, component of the EKC/KEOPS complex that is required for the formation of a threonylcarbamoyl group on adenosine at position 37 (t(6)A37) in tRNAs that read codons beginning with adenine. The complex is probably involved in the transfer of the threonylcarbamoyl moiety of threonylcarbamoyl-AMP (TC-AMP) to the N6 group of A37. KAE1 likely plays a direct catalytic role in this reaction, but requires other protein(s) of the complex to fulfill this activity. The EKC/KEOPS complex also promotes both telomere uncapping and telomere elongation. The complex is required for efficient recruitment of transcriptional coactivators. This Saccharomyces cerevisiae (strain ATCC 204508 / S288c) (Baker's yeast) protein is tRNA N6-adenosine threonylcarbamoyltransferase.